Here is a 263-residue protein sequence, read N- to C-terminus: 3-deoxy-manno-octulosonate cytidylyltransferase (263 aa).

It belongs to the KdsB family.

The protein localises to the cytoplasm. It carries out the reaction 3-deoxy-alpha-D-manno-oct-2-ulosonate + CTP = CMP-3-deoxy-beta-D-manno-octulosonate + diphosphate. Its pathway is nucleotide-sugar biosynthesis; CMP-3-deoxy-D-manno-octulosonate biosynthesis; CMP-3-deoxy-D-manno-octulosonate from 3-deoxy-D-manno-octulosonate and CTP: step 1/1. It participates in bacterial outer membrane biogenesis; lipopolysaccharide biosynthesis. Functionally, activates KDO (a required 8-carbon sugar) for incorporation into bacterial lipopolysaccharide in Gram-negative bacteria. This chain is 3-deoxy-manno-octulosonate cytidylyltransferase, found in Burkholderia multivorans (strain ATCC 17616 / 249).